A 600-amino-acid chain; its full sequence is NADH-quinone oxidoreductase subunit C/D (600 aa).

The tract at residues 1 to 190 is NADH dehydrogenase I subunit C; sequence MVNNMTDLTA…DPFELTKAKQ (190 aa). The interval 214–600 is NADH dehydrogenase I subunit D; the sequence is DFMFLNLGPN…IDFVMSDVDR (387 aa).

The protein in the N-terminal section; belongs to the complex I 30 kDa subunit family. This sequence in the C-terminal section; belongs to the complex I 49 kDa subunit family. In terms of assembly, NDH-1 is composed of 13 different subunits. Subunits NuoB, CD, E, F, and G constitute the peripheral sector of the complex.

The protein localises to the cell inner membrane. The catalysed reaction is a quinone + NADH + 5 H(+)(in) = a quinol + NAD(+) + 4 H(+)(out). Its function is as follows. NDH-1 shuttles electrons from NADH, via FMN and iron-sulfur (Fe-S) centers, to quinones in the respiratory chain. The immediate electron acceptor for the enzyme in this species is believed to be ubiquinone. Couples the redox reaction to proton translocation (for every two electrons transferred, four hydrogen ions are translocated across the cytoplasmic membrane), and thus conserves the redox energy in a proton gradient. The sequence is that of NADH-quinone oxidoreductase subunit C/D from Citrobacter koseri (strain ATCC BAA-895 / CDC 4225-83 / SGSC4696).